A 374-amino-acid polypeptide reads, in one-letter code: Phosphomevalonate kinase (374 aa).

The protein belongs to the GHMP kinase family. In terms of assembly, homodimer. It depends on Mg(2+) as a cofactor.

The catalysed reaction is (R)-5-phosphomevalonate + ATP = (R)-5-diphosphomevalonate + ADP. Its pathway is isoprenoid biosynthesis; isopentenyl diphosphate biosynthesis via mevalonate pathway; isopentenyl diphosphate from (R)-mevalonate: step 2/3. Functionally, catalyzes the phosphorylation of (R)-mevalonate 5-phosphate (MVAP) to (R)-mevalonate 5-diphosphate (MVAPP). Functions in the mevalonate (MVA) pathway leading to isopentenyl diphosphate (IPP), a key precursor for the biosynthesis of isoprenoid compounds. In Streptomyces sp. (strain CL190), this protein is Phosphomevalonate kinase.